The chain runs to 456 residues: Protein shifted (456 aa).

A signal peptide spans 1–30 (MTHQGIGCLVKWLYLVLIVHTLLCIGQLEC). Residues 34–112 (HHNRNNNNNN…GGGGSRHNRN (79 aa)) form a disordered region. Residues 44-55 (RRADSSSSEEGH) are compositionally biased toward basic and acidic residues. A glycan (N-linked (GlcNAc...) asparagine) is linked at Asn57. Residues 77-87 (HQPRRGQRKKQ) show a composition bias toward basic residues. The segment covering 88 to 107 (QGGGGGGSGGGGGNGGGGGS) has biased composition (gly residues). The region spanning 119-261 (LWINEQQLKM…PIRLNFKKEC (143 aa)) is the WIF domain. 3 N-linked (GlcNAc...) asparagine glycosylation sites follow: Asn173, Asn217, and Asn227. Intrachain disulfides connect Cys224-Cys261, Cys283-Cys293, Cys287-Cys299, Cys301-Cys310, Cys315-Cys325, Cys319-Cys331, Cys333-Cys342, Cys347-Cys357, Cys351-Cys363, Cys365-Cys374, Cys379-Cys389, Cys383-Cys395, Cys397-Cys406, Cys416-Cys423, Cys418-Cys429, and Cys431-Cys440. 5 EGF-like domains span residues 279 to 311 (TLQE…QYCE), 315 to 342 (CFPQ…GTQC), 343 to 375 (EGGI…LRCE), 376 to 407 (YSKC…DHCE), and 412 to 441 (QRSI…RHCN). An N-linked (GlcNAc...) asparagine glycan is attached at Asn324. Residue Asn420 is glycosylated (N-linked (GlcNAc...) asparagine).

As to quaternary structure, interacts with hh. At the blastoderm stage, it is ubiquitously expressed. As embryogenesis continues, it is expressed in the epidermis and central nervous system, this expression being segmentally modulated. Also highly expressed at the foregut and hindgut throughout embryogenesis. In third instar wing imaginal disks, it is highly expressed in the most anterior and posterior parts of the disk and weakly expressed at the antero/posterior (A/P) compartment border. In the leg disks and the antenna part of the eye-antennal imaginal disk it is also weakly expressed at the A/P compartment border. Weakly expressed in the morphogenetic furrow in the eye primordium.

It is found in the secreted. The protein resides in the extracellular space. Its subcellular location is the extracellular matrix. Functionally, required for normal accumulation and movement of lipid-modified hedgehog (hh) morphogen. May act by stabilizing the interaction between heparan sulfate proteoglycans (HSPGs) and hh, HSPGs being required for diffusion of hh morphogen. Not involved in wingless (wg) morphogen movement, suggesting that it may provide HSPG specificity for Hh. The chain is Protein shifted (shf) from Drosophila melanogaster (Fruit fly).